The chain runs to 143 residues: 3-dehydroquinate dehydratase (143 aa).

The active-site Proton acceptor is tyrosine 23. 3 residues coordinate substrate: asparagine 74, histidine 80, and aspartate 87. Histidine 100 functions as the Proton donor in the catalytic mechanism. Substrate-binding positions include 101–102 (IS) and arginine 111.

Belongs to the type-II 3-dehydroquinase family. As to quaternary structure, homododecamer.

The enzyme catalyses 3-dehydroquinate = 3-dehydroshikimate + H2O. Its pathway is metabolic intermediate biosynthesis; chorismate biosynthesis; chorismate from D-erythrose 4-phosphate and phosphoenolpyruvate: step 3/7. Functionally, catalyzes a trans-dehydration via an enolate intermediate. In Endomicrobium trichonymphae, this protein is 3-dehydroquinate dehydratase.